The primary structure comprises 240 residues: Axial regulator YABBY 3 (240 aa).

The C4-type zinc-finger motif lies at 30–57; sequence CSFCDTVLAVSVPPSSLFKTVTVRCGHC. Positions 135–156 are disordered; sequence DHLQEMPRPPPANRPPEKRQRV.

Belongs to the YABBY family. In terms of assembly, interacts with SPL/NZZ. Interacts with SPEAR2. Binds to LUG and LUH; these complexes promote adaxial cell identity in leaves as well as embryonic shoot apical meristem (SAM) initiation and postembryonic SAM maintenance. Expressed in abaxial regions of lateral aerial organ primordia leading to cotyledons, leaves, flower meristems, sepals, petals, stamen and carpels, but not in roots.

Its subcellular location is the nucleus. Functionally, involved in the abaxial cell fate determination during embryogenesis and organogenesis. Regulates the initiation of embryonic shoot apical meristem (SAM) development. Contributes to the repression of KNOX genes (STM, KNAT1/BP and KNAT2) to avoid ectopic meristems. Binds DNA without sequence specificity. The chain is Axial regulator YABBY 3 (YAB3) from Arabidopsis thaliana (Mouse-ear cress).